Here is a 97-residue protein sequence, read N- to C-terminus: Conotoxin Cal6.1a (97 aa).

A signal peptide spans 1–22 (MKLTTVLVVALLVLAACQFTVT). The interval 23 to 46 (DNSGDDPENPSLRSVGENQNPDST) is disordered. Positions 23-68 (DNSGDDPENPSLRSVGENQNPDSTKTITAWATRDMTNMRRGLNRPS) are excised as a propeptide. 3 cysteine pairs are disulfide-bonded: cysteine 71–cysteine 87, cysteine 78–cysteine 91, and cysteine 86–cysteine 96.

Belongs to the conotoxin O1 superfamily. Expressed by the venom duct.

It is found in the secreted. Its function is as follows. Probable neurotoxin with unknown target. Possibly targets ion channels. This is Conotoxin Cal6.1a from Californiconus californicus (California cone).